A 116-amino-acid polypeptide reads, in one-letter code: Iron-sulfur cluster insertion protein ErpA (116 aa).

Residues Cys44, Cys108, and Cys110 each coordinate iron-sulfur cluster.

It belongs to the HesB/IscA family. Homodimer. Requires iron-sulfur cluster as cofactor.

In terms of biological role, required for insertion of 4Fe-4S clusters for at least IspG. The chain is Iron-sulfur cluster insertion protein ErpA from Pseudomonas putida (strain ATCC 47054 / DSM 6125 / CFBP 8728 / NCIMB 11950 / KT2440).